Reading from the N-terminus, the 392-residue chain is Homoserine O-acetyltransferase (392 aa).

The 305-residue stretch at 52–356 folds into the AB hydrolase-1 domain; it reads NVVVVLHALT…ICGHDGFLVE (305 aa). Catalysis depends on Ser-157, which acts as the Nucleophile. Arg-227 provides a ligand contact to substrate. Active-site residues include Asp-320 and His-350. Asp-351 lines the substrate pocket. The segment at 373–392 is disordered; it reads SQSAGPGGAGPGSRKGTTRR.

The protein belongs to the AB hydrolase superfamily. MetX family. As to quaternary structure, homodimer.

It localises to the cytoplasm. It carries out the reaction L-homoserine + acetyl-CoA = O-acetyl-L-homoserine + CoA. It participates in amino-acid biosynthesis; L-methionine biosynthesis via de novo pathway; O-acetyl-L-homoserine from L-homoserine: step 1/1. Transfers an acetyl group from acetyl-CoA to L-homoserine, forming acetyl-L-homoserine. The sequence is that of Homoserine O-acetyltransferase from Mycobacterium avium (strain 104).